The primary structure comprises 362 residues: Putative G-protein coupled receptor B0244.5 (362 aa).

Residues 1–47 (MQNIFENCSYHSKYEPYFLNCTNTTNQCVLIQDVGIIQAIDFWANLC) are Extracellular-facing. N-linked (GlcNAc...) asparagine glycosylation is found at Asn-7, Asn-20, and Asn-23. The helical transmembrane segment at 48–68 (IPFTLFVIAFILNGYYLSILI) threads the bilayer. Residues 69 to 81 (PEFRKMNDTTKKQ) lie on the Cytoplasmic side of the membrane. The helical transmembrane segment at 82-102 (YIFVVSRGISSLSASSIMMVL) threads the bilayer. The Extracellular segment spans residues 103-125 (RLLKMLSTSFTVYFLFFLIDDLS). The chain crosses the membrane as a helical span at residues 126 to 145 (FYSLLGSYVGSTLLLYLATV). Over 146-161 (RPIFYSIQISVRIVYK) the chain is Cytoplasmic. A helical transmembrane segment spans residues 162–182 (FALVNVLLAVVLAVTTAIFQA). At 183 to 204 (AEVSDGFFHCDVQHCQPIINIA) the chain is on the extracellular side. The chain crosses the membrane as a helical span at residues 205 to 225 (MFVIIATSFLIPIITLTFVLV). The Cytoplasmic portion of the chain corresponds to 226-255 (TLCFQKSRTQSIGNFTVDNSVYKSARTRLA). A helical transmembrane segment spans residues 256–276 (WTLFTFTLISLTEMIPSSFLV). The Extracellular segment spans residues 277–295 (NLRVEDTITICVNFYQADH). The chain crosses the membrane as a helical span at residues 296 to 316 (LFIPAIMNSFQTLAWGIALIV). The Cytoplasmic segment spans residues 317–362 (DPLCALLFDPRIRKVWVEHVSRLSIIIGRSFEACCHSNLNKEIQDK).

It belongs to the G-protein coupled receptor 1 family. B0244 subfamily.

It is found in the cell membrane. The sequence is that of Putative G-protein coupled receptor B0244.5 from Caenorhabditis elegans.